The chain runs to 337 residues: Holliday junction branch migration complex subunit RuvB (337 aa).

A large ATPase domain (RuvB-L) region spans residues 4-184; it reads ADRLIQPQVL…FGIPLRLEFY (181 aa). Residues R24, G65, K68, T69, T70, 131 to 133, R174, Y184, and R221 each bind ATP; that span reads EDY. T69 contributes to the Mg(2+) binding site. Positions 185 to 255 are small ATPAse domain (RuvB-S); that stretch reads NVKDLCTIVT…VAQQALDMLD (71 aa). Residues 258-337 are head domain (RuvB-H); it reads QEGFDYLDRK…FNIITPDVPK (80 aa). The DNA site is built by R294, R313, and R318.

This sequence belongs to the RuvB family. Homohexamer. Forms an RuvA(8)-RuvB(12)-Holliday junction (HJ) complex. HJ DNA is sandwiched between 2 RuvA tetramers; dsDNA enters through RuvA and exits via RuvB. An RuvB hexamer assembles on each DNA strand where it exits the tetramer. Each RuvB hexamer is contacted by two RuvA subunits (via domain III) on 2 adjacent RuvB subunits; this complex drives branch migration. In the full resolvosome a probable DNA-RuvA(4)-RuvB(12)-RuvC(2) complex forms which resolves the HJ.

It localises to the cytoplasm. It carries out the reaction ATP + H2O = ADP + phosphate + H(+). The RuvA-RuvB-RuvC complex processes Holliday junction (HJ) DNA during genetic recombination and DNA repair, while the RuvA-RuvB complex plays an important role in the rescue of blocked DNA replication forks via replication fork reversal (RFR). RuvA specifically binds to HJ cruciform DNA, conferring on it an open structure. The RuvB hexamer acts as an ATP-dependent pump, pulling dsDNA into and through the RuvAB complex. RuvB forms 2 homohexamers on either side of HJ DNA bound by 1 or 2 RuvA tetramers; 4 subunits per hexamer contact DNA at a time. Coordinated motions by a converter formed by DNA-disengaged RuvB subunits stimulates ATP hydrolysis and nucleotide exchange. Immobilization of the converter enables RuvB to convert the ATP-contained energy into a lever motion, pulling 2 nucleotides of DNA out of the RuvA tetramer per ATP hydrolyzed, thus driving DNA branch migration. The RuvB motors rotate together with the DNA substrate, which together with the progressing nucleotide cycle form the mechanistic basis for DNA recombination by continuous HJ branch migration. Branch migration allows RuvC to scan DNA until it finds its consensus sequence, where it cleaves and resolves cruciform DNA. The protein is Holliday junction branch migration complex subunit RuvB of Shewanella denitrificans (strain OS217 / ATCC BAA-1090 / DSM 15013).